A 241-amino-acid chain; its full sequence is DNA-binding dual master transcriptional regulator RpaA (241 aa).

Residues 3 to 119 form the Response regulatory domain; that stretch reads RILIIDDDPA…EMLARVRALL (117 aa). The residue at position 52 (Asp52) is a 4-aspartylphosphate. Positions 132-231 form a DNA-binding region, ompR/PhoB-type; that stretch reads SEILNQGPLT…VYGAGYCLEL (100 aa).

Interacts with reduced ferredoxin (petF). Interacts with CikA, RpaB, SasA, Sll0038 (pixG) and a number of other proteins. Phosphorylated by SasA; phosphorylation is maximal when KaiC phosphorylation is active during the circadian cycle. Dephosphorylated by CikA. CikA and SasA cooperation generates RpaA activity oscillation that is distinct from that generated by CikA or SasA alone and offset from the rhythm of KaiC phosphorylation.

It localises to the cytoplasm. Response regulator of 2 two-component regulatory systems SasA/RpaA and CikA/RpaA involved in genome-wide circadian gene expression. The histidine kinases have opposing effects modulated by the clock oscillator proteins; SasA phosphorylates RpaA (stimulated by fully phosphorylated KaiC1) while CikA dephosphorylates phospho-RpaA (stimulated by the phospho-Ser-432-KaiC1-KaiB complex). Its function is as follows. The RpaA regulon is about 300 genes, and includes itself, cikA, sigE, sigG, genes involved in photosynthesis, carbon metabolism in the light and dark, phototaxis, CRISPR arrays 2 and 3 as well as nearly 90 ncRNAs. Genes are up- or down-regulated in its absence. Involved in regulation of primary sugar and amino acid metabolism and in adaptation to light changes. Regulates the accumulation of the monomeric photosystem I and the D1 protein under high light conditions. Overexpression causes cells to grow more slowly, increases levels of transcripts for clock oscillator genes in the light and the dark, increases levels of SigE protein, increases accumulation of sugar catabolic enzymes in the dark with concomitant decreases in most sugar metabolites. Plays a role in cell division; overexpression from the psbAII promoter increases expression of some cell-division-related genes, alters cell volume and changes the outer cell membrane and cell wall appearance. In Synechocystis sp. (strain ATCC 27184 / PCC 6803 / Kazusa), this protein is DNA-binding dual master transcriptional regulator RpaA.